We begin with the raw amino-acid sequence, 3075 residues long: Laminin subunit alpha-1 (3075 aa).

The N-terminal stretch at 1-17 (MRGGVLLVLLLCVAAQC) is a signal peptide. Residues 18-269 (RQRGLFPAIL…SIKDISVGGM (252 aa)) form the Laminin N-terminal domain. Disulfide bonds link Cys-270–Cys-279, Cys-272–Cys-290, Cys-292–Cys-301, Cys-304–Cys-324, Cys-327–Cys-336, Cys-329–Cys-361, Cys-364–Cys-373, Cys-376–Cys-394, Cys-397–Cys-409, Cys-399–Cys-427, Cys-429–Cys-438, Cys-441–Cys-451, Cys-454–Cys-467, Cys-456–Cys-471, Cys-473–Cys-482, and Cys-485–Cys-500. 4 consecutive Laminin EGF-like domains span residues 270–326 (CICY…TCEA), 327–396 (CNCH…PCRP), 397–453 (CNCD…TCVS), and 454–502 (CGCN…GCSE). In terms of domain architecture, Laminin EGF-like 5; first part spans 503-512 (CFCFGVSDVC). The Laminin IV type A 1 domain maps to 516-708 (SWPVGQVNSM…DLVVAADVEH (193 aa)). Residue Asn-665 is glycosylated (N-linked (GlcNAc...) asparagine). A Laminin EGF-like 5; second part domain is found at 709 to 741 (CECPQGYTGTSCESCLSGYYRVDGILFGGICQP). 32 disulfide bridges follow: Cys-742–Cys-751, Cys-744–Cys-757, Cys-760–Cys-769, Cys-772–Cys-788, Cys-791–Cys-806, Cys-793–Cys-816, Cys-819–Cys-828, Cys-831–Cys-846, Cys-849–Cys-863, Cys-851–Cys-870, Cys-873–Cys-882, Cys-885–Cys-899, Cys-902–Cys-914, Cys-904–Cys-921, Cys-923–Cys-932, Cys-935–Cys-948, Cys-951–Cys-963, Cys-953–Cys-969, Cys-971–Cys-980, Cys-983–Cys-995, Cys-998–Cys-1007, Cys-1000–Cys-1014, Cys-1016–Cys-1025, Cys-1028–Cys-1041, Cys-1044–Cys-1056, Cys-1046–Cys-1063, Cys-1065–Cys-1074, Cys-1077–Cys-1087, Cys-1090–Cys-1102, Cys-1092–Cys-1118, Cys-1120–Cys-1129, and Cys-1132–Cys-1147. 8 consecutive Laminin EGF-like domains span residues 742–790 (CECH…DCQP), 791–848 (CACP…SCVP), 849–901 (CDCS…NCRA), 902–950 (CECH…GCRP), 951–997 (CNCS…SCTP), 998–1043 (CDCP…GCQA), 1044–1089 (CNCS…DCVP), and 1090–1149 (CDCD…GCSP). In terms of domain architecture, Laminin EGF-like 14; first part spans 1150–1159 (CFCSGLSHLC). In terms of domain architecture, Laminin IV type A 2 spans 1170-1361 (VTLGSDQPLL…EEEVASLLEN (192 aa)). Positions 1362 to 1402 (CVCPPGTVGFSCQDCAPGYHRGKLPAGSDRGPRPLVAPCVP) constitute a Laminin EGF-like 14; second part domain. Cystine bridges form between Cys-1403–Cys-1412, Cys-1405–Cys-1419, Cys-1422–Cys-1431, Cys-1434–Cys-1449, Cys-1452–Cys-1466, Cys-1454–Cys-1476, Cys-1479–Cys-1488, Cys-1491–Cys-1506, Cys-1509–Cys-1521, Cys-1511–Cys-1528, Cys-1530–Cys-1539, and Cys-1542–Cys-1553. Laminin EGF-like domains are found at residues 1403 to 1451 (CSCN…DCAL), 1452 to 1508 (CACP…SCQK), and 1509 to 1555 (CDCN…DCVS). Positions 1556–2116 (CDDECVGVLL…SQARKQAASI (561 aa)) are domain II and I. Asn-1579, Asn-1689, Asn-1717, Asn-2047, and Asn-2243 each carry an N-linked (GlcNAc...) asparagine glycan. Residues 1706–1783 (MQIRDFTQLH…KMQESNHLLL (78 aa)) are a coiled coil. 5 consecutive Laminin G-like domains span residues 2117 to 2297 (KVAV…CRGC), 2305 to 2481 (DPSF…RKGC), 2486 to 2673 (IRSV…LDTC), 2713 to 2885 (AHQF…VNRC), and 2890 to 3070 (QEGT…LHSC). Intrachain disulfides connect Cys-2271–Cys-2297 and Cys-2457–Cys-2481. Positions 2534-2536 (RGD) match the Cell attachment site motif. 3 disulfide bridges follow: Cys-2646–Cys-2673, Cys-2860–Cys-2885, and Cys-3039–Cys-3070.

In terms of assembly, laminin is a complex glycoprotein, consisting of three different polypeptide chains (alpha, beta, gamma), which are bound to each other by disulfide bonds into a cross-shaped molecule comprising one long and three short arms with globules at each end. Alpha-1 is a subunit of laminin-1 (laminin-111 or EHS laminin) and laminin-3 (laminin-121 or S-laminin). In terms of processing, tyrosine phosphorylated by PKDCC/VLK.

Its subcellular location is the secreted. It localises to the extracellular space. It is found in the extracellular matrix. The protein resides in the basement membrane. In terms of biological role, binding to cells via a high affinity receptor, laminin is thought to mediate the attachment, migration and organization of cells into tissues during embryonic development by interacting with other extracellular matrix components. The polypeptide is Laminin subunit alpha-1 (LAMA1) (Homo sapiens (Human)).